We begin with the raw amino-acid sequence, 195 residues long: Peptidyl-tRNA hydrolase (195 aa).

Tyr-14 contributes to the tRNA binding site. His-19 functions as the Proton acceptor in the catalytic mechanism. Tyr-64 and Asn-66 together coordinate tRNA.

This sequence belongs to the PTH family. As to quaternary structure, monomer.

The protein resides in the cytoplasm. It catalyses the reaction an N-acyl-L-alpha-aminoacyl-tRNA + H2O = an N-acyl-L-amino acid + a tRNA + H(+). Its function is as follows. Hydrolyzes ribosome-free peptidyl-tRNAs (with 1 or more amino acids incorporated), which drop off the ribosome during protein synthesis, or as a result of ribosome stalling. Catalyzes the release of premature peptidyl moieties from peptidyl-tRNA molecules trapped in stalled 50S ribosomal subunits, and thus maintains levels of free tRNAs and 50S ribosomes. This Desulforudis audaxviator (strain MP104C) protein is Peptidyl-tRNA hydrolase.